The primary structure comprises 422 residues: MDQFLITGSSRIAGEVTISGAKNAALPLLAAMILAETPTTLHNVPSLQDVRTLIELIGGMGIKIQKQGDTVTCDTKSIDNFYAPYDLVKTMRASILVLGPLLARFGEAEVSLPGGCAIGSRPVDQHLKAFEAMGASITVENGYVIAQAPKGGKLLGCKFSFDMVTVGGTENVIMAAALAKGTTVLGNCALEPEVVDLANMLVAMGAKISGIGTAIMTIEGVERLHGCEYAVVPDRIETGSYLAGALMTGGDVLTKNTSALLLTPVLEKFEDMGAIITSGDDWIRAQMKGRPKAVDIRTQPHPGFPTDMQAQVMAIACLADGTSTFIENIFENRYMHVPELNRLGASIQVDGHTAVVKGVECFTAAPVMATDLRASMSLVMAAAAAEGESLIDRIYHIDRGYEHVEKKLRALGVNIERINSND.

22-23 contributes to the phosphoenolpyruvate binding site; the sequence is KN. Arg92 contacts UDP-N-acetyl-alpha-D-glucosamine. The active-site Proton donor is Cys116. Cys116 is subject to 2-(S-cysteinyl)pyruvic acid O-phosphothioketal. UDP-N-acetyl-alpha-D-glucosamine contacts are provided by residues 121–125, Asp307, and Ile329; that span reads RPVDQ.

This sequence belongs to the EPSP synthase family. MurA subfamily.

Its subcellular location is the cytoplasm. It carries out the reaction phosphoenolpyruvate + UDP-N-acetyl-alpha-D-glucosamine = UDP-N-acetyl-3-O-(1-carboxyvinyl)-alpha-D-glucosamine + phosphate. The protein operates within cell wall biogenesis; peptidoglycan biosynthesis. Functionally, cell wall formation. Adds enolpyruvyl to UDP-N-acetylglucosamine. This Psychrobacter arcticus (strain DSM 17307 / VKM B-2377 / 273-4) protein is UDP-N-acetylglucosamine 1-carboxyvinyltransferase.